Here is a 557-residue protein sequence, read N- to C-terminus: MNKLRSSAITQGVQRSPNRSMLRAVGFNDEDFNKPIIGVANGYSTITPCNMGLNKLALKAEESIKRSGGMPQMFGTITVSDGISMGTEGMKYSLVSREVIADSIETACNAQSMDGVLAIGGCDKNMPGAMIAIARMNIPSIFIYGGTIKPGKLHGEDLTVVSAFEAVGQLTSGKINEERLIQVEKNCIPGAGSCGGMFTANTMSAVIEVLGLSLPHSSTMAAEDLEKELSADKSAEILVSAIEKDIRPLDLMTKKAFENAISVIMAIGGSTNAVLHILAIANTAGIDININDFERIRQKVPVICDLKPSGKYVTVDLHKAGGIPQVMKILLNAGLIHGDCKNIEGKTISEYLQNIPDKPPTNQNVIRDIDNPLYKKGHLAILKGNLASEGSVAKISGVKNPVLTGPAKIFESEEDCLKSILNNDIKAGDVVVIRNEGPVGGPGMREMLAPTSAIVGQGLGEKVALITDGRFSGGTYGLVVGHIAPEAAVGGNIALIKQGDLITVDAVKQLIEVDLSDEELEKRKKDWVKPIQKYKRGILSKYSRIVSTSSLGAVTDL.

Residue Cys49 coordinates [2Fe-2S] cluster. Asp81 is a Mg(2+) binding site. Cys122 contributes to the [2Fe-2S] cluster binding site. Residues Asp123 and Lys124 each coordinate Mg(2+). Position 124 is an N6-carboxylysine (Lys124). Cys194 is a [2Fe-2S] cluster binding site. Glu446 lines the Mg(2+) pocket. Ser472 serves as the catalytic Proton acceptor.

It belongs to the IlvD/Edd family. Homodimer. The cofactor is [2Fe-2S] cluster. It depends on Mg(2+) as a cofactor.

The catalysed reaction is (2R)-2,3-dihydroxy-3-methylbutanoate = 3-methyl-2-oxobutanoate + H2O. The enzyme catalyses (2R,3R)-2,3-dihydroxy-3-methylpentanoate = (S)-3-methyl-2-oxopentanoate + H2O. The protein operates within amino-acid biosynthesis; L-isoleucine biosynthesis; L-isoleucine from 2-oxobutanoate: step 3/4. Its pathway is amino-acid biosynthesis; L-valine biosynthesis; L-valine from pyruvate: step 3/4. In terms of biological role, functions in the biosynthesis of branched-chain amino acids. Catalyzes the dehydration of (2R,3R)-2,3-dihydroxy-3-methylpentanoate (2,3-dihydroxy-3-methylvalerate) into 2-oxo-3-methylpentanoate (2-oxo-3-methylvalerate) and of (2R)-2,3-dihydroxy-3-methylbutanoate (2,3-dihydroxyisovalerate) into 2-oxo-3-methylbutanoate (2-oxoisovalerate), the penultimate precursor to L-isoleucine and L-valine, respectively. This chain is Dihydroxy-acid dehydratase, found in Prochlorococcus marinus (strain AS9601).